The chain runs to 374 residues: Tetraacyldisaccharide 4'-kinase (374 aa).

59–66 (TAGGTGKT) serves as a coordination point for ATP.

Belongs to the LpxK family.

It carries out the reaction a lipid A disaccharide + ATP = a lipid IVA + ADP + H(+). The protein operates within glycolipid biosynthesis; lipid IV(A) biosynthesis; lipid IV(A) from (3R)-3-hydroxytetradecanoyl-[acyl-carrier-protein] and UDP-N-acetyl-alpha-D-glucosamine: step 6/6. Its function is as follows. Transfers the gamma-phosphate of ATP to the 4'-position of a tetraacyldisaccharide 1-phosphate intermediate (termed DS-1-P) to form tetraacyldisaccharide 1,4'-bis-phosphate (lipid IVA). In Elusimicrobium minutum (strain Pei191), this protein is Tetraacyldisaccharide 4'-kinase.